Here is a 345-residue protein sequence, read N- to C-terminus: Large ribosomal subunit protein uL4 (345 aa).

Alanine 2 bears the N-acetylalanine mark.

The protein belongs to the universal ribosomal protein uL4 family.

This Caenorhabditis elegans protein is Large ribosomal subunit protein uL4 (rpl-4).